Here is an 852-residue protein sequence, read N- to C-terminus: SPS-sensor component SSY1 (852 aa).

Topologically, residues 1–285 (MSSVNQIYDL…HIQRKLKVRH (285 aa)) are cytoplasmic. The segment at 21-41 (DSHSQEHDTSSSLAKNDTDGT) is disordered. Polar residues predominate over residues 30-41 (SSSLAKNDTDGT). A helical membrane pass occupies residues 286 to 306 (IQMLSIGACFSVGLFLTSGKA). Over 307-329 (FSIAGPFGTLLGFGLTGSIILAT) the chain is Extracellular. A helical membrane pass occupies residues 330–350 (MLSFTELSTLIPVSSGFSGLA). The Cytoplasmic portion of the chain corresponds to 351–357 (SRFVEDA). The helical transmembrane segment at 358 to 378 (FGFALGWTYWISCMLALPAQV) threads the bilayer. Residues 379–400 (SSSTFYLSYYNNVNISKGVTAG) are Extracellular-facing. Residues 401 to 421 (FITLFSAFSIVVNLLDVSIMG) form a helical membrane-spanning segment. Residue Glu-422 is a topological domain, cytoplasmic. The helical transmembrane segment at 423–443 (IVYVAGISKVIIAILMVFTMI) threads the bilayer. Over 444–500 (ILNAGHGNDIHEGVGFRYWDSSKSVRNLTYGLYRPTFDLADAGEGSKKGISGPKGRF) the chain is Extracellular. A helical transmembrane segment spans residues 501–521 (LATASVMLISTFAFSGVEMTF). The Cytoplasmic segment spans residues 522–540 (LASGEAINPRKTIPSATKR). Residues 541-561 (TFSIVLISYVFLIFSVGINIY) traverse the membrane as a helical segment. The Extracellular segment spans residues 562–623 (SGDPRLLSYF…PWVVALQNFG (62 aa)). Residues 624–644 (LCTFASAFNAILIFFTATAGI) form a helical membrane-spanning segment. Topologically, residues 645–673 (SSLFSCSRTLYAMSVQRKAPPVFEICSKR) are cytoplasmic. Residues 674 to 694 (GVPYVSVIFSSLFSVIAYIAV) traverse the membrane as a helical segment. The Extracellular portion of the chain corresponds to 695-703 (DQTAIENFD). The helical transmembrane segment at 704–724 (VLANVSSASTSIIWMGLNLSF) threads the bilayer. The Cytoplasmic segment spans residues 725–755 (LRFYYALKQRKDIISRNDSSYPYKSPFQPYL). A helical transmembrane segment spans residues 756–776 (AIYGLVGCSLFVIFMGYPNFI). Over 777–784 (HHFWSTKA) the chain is Extracellular. The helical transmembrane segment at 785–805 (FFSAYGGLMFFFISYTAYKVL) threads the bilayer. Residues 806-852 (GTSKIQRLDQLDMDSGRREMDRTDWTEHSQYLGTYRERAKKLVTWLI) lie on the Cytoplasmic side of the membrane.

It belongs to the amino acid-polyamine-organocation (APC) superfamily. In terms of assembly, component of the plasma membrane SPS (SSY1-PTR3-SSY5) amino acid sensor complex. Interacts directly with PTR3 and SSY5. Interacts with YCK1.

The protein localises to the cell membrane. Its function is as follows. Amino acid sensor component of the SPS-sensor system, which regulates the expression of several amino acid-metabolizing enzymes and amino acid- and peptide-permeases in response to extracellular amino acid levels by controlling the activity of two transcription factors, STP1 and STP2. Amino-acid permease homolog that seems to interact directly with the extracellular signaling molecules, but has no amino acid transporter activity. May recruit casein kinases YCK1 and YCK2 to hyperphosphorylate and activate downstream component PTR3 in response to amino acid stimulus. The polypeptide is SPS-sensor component SSY1 (SSY1) (Saccharomyces cerevisiae (strain ATCC 204508 / S288c) (Baker's yeast)).